The sequence spans 4870 residues: Malformin synthetase mlfA (4870 aa).

An adenylation 1 region spans residues Glu-106–Leu-497. One can recognise a Carrier 1 domain in the interval Leu-635 to Glu-711. Position 672 is an O-(pantetheine 4'-phosphoryl)serine (Ser-672). The condensation 1 stretch occupies residues Glu-749–Ala-1133. The interval Asp-1161–Arg-1550 is adenylation 2. The region spanning Thr-1688–Thr-1765 is the Carrier 2 domain. An O-(pantetheine 4'-phosphoryl)serine modification is found at Ser-1725. 2 disordered regions span residues Ala-1764–Val-1794 and Gly-1829–Val-1859. Composition is skewed to low complexity over residues Glu-1769 to Asp-1792 and Ser-1830 to Ser-1846. The condensation 2 stretch occupies residues Glu-1898 to Leu-2313. Positions Val-2336–Leu-2728 are adenylation 3. The Carrier 3 domain occupies Arg-2864 to Gly-2940. Position 2901 is an O-(pantetheine 4'-phosphoryl)serine (Ser-2901). 2 condensation regions span residues Trp-2957–Gln-3422 and Asp-3443–Val-3862. Residues His-3887–Phe-4277 form an adenylation 4 region. The region spanning Met-4411–Val-4487 is the Carrier 4 domain. An O-(pantetheine 4'-phosphoryl)serine modification is found at Ser-4448. Residues Glu-4524–Asn-4837 are condensation 5.

Belongs to the NRP synthetase family.

The protein operates within secondary metabolite biosynthesis. Functionally, nonribosomal peptide synthetase; part of the gene cluster that mediates the biosynthesis of malformins, cyclic pentapeptides with a disulfide bond between 2 consecutive cysteins, that show potential anti-tumor as well as antimalarial and antitrypanosomal properties. The nonribosomal peptide synthetase mlfA is responsible of the formation of the cyclic pentapeptide. The malformin biosynthesis clusters in malformin-producing fungi also contain enzymes involved in the formation of the disulfide bond between the two consecutive cysteins within malformins, in addition to additional tailoring enzymes such as methyltransferases or oxidoreductases. They are also composed of up to 4 major facilitator superfamily transporters, and transcription factors probably involved in the regulation of the expression of those clusters. The chain is Malformin synthetase mlfA from Aspergillus niger (strain ATCC 1015 / CBS 113.46 / FGSC A1144 / LSHB Ac4 / NCTC 3858a / NRRL 328 / USDA 3528.7).